The following is a 1431-amino-acid chain: Caskin-1 (1431 aa).

ANK repeat units lie at residues 48 to 77 (DGFS…AVDI), 81 to 110 (KGMR…AVNV), 114 to 143 (EGHI…NPCM), 147 to 176 (SGKT…CAAL), 188 to 217 (NGTS…DINR), and 220 to 249 (KSGT…NAQV). Position 253 is a phosphotyrosine (Tyr-253). The SH3 domain occupies 281–347 (SAALQVRATK…PSSLGEAIVK (67 aa)). The segment at 348–372 (RAGSRTGSEPSPPQGGGSLGPSAPP) is disordered. Ser-358 carries the post-translational modification Phosphoserine. Positions 375-471 (IWVLRKPFAG…PKKLESASAS (97 aa)) are CASK-binding. Position 398 is an omega-N-methylarginine (Arg-398). The segment covering 420-430 (SQKSVSESSPG) has biased composition (polar residues). The tract at residues 420 to 471 (SQKSVSESSPGDSPVKPPEGSSGAARSQPPAAHAGQVYGEQPPKKLESASAS) is disordered. Ser-423 and Ser-432 each carry phosphoserine. SAM domains are found at residues 476–539 (KSAE…LNIP) and 545–609 (HKPA…LAEL). Ser-637 and Ser-650 each carry phosphoserine. A compositionally biased stretch (low complexity) spans 669–679 (LSGPAEAGAAA). Disordered regions lie at residues 669–1000 (LSGP…TGSA) and 1016–1041 (GGGG…EPGR). Residues 692–712 (RTTSRESSLSGRARHISSSQE) are compositionally biased toward polar residues. Phosphoserine occurs at positions 723 and 728. Thr-741 is modified (phosphothreonine). Position 791 is a phosphoserine (Ser-791). The span at 848–860 (PPAPGPAPPPVPA) shows a compositional bias: pro residues. Ser-891, Ser-893, and Ser-989 each carry phosphoserine. Residues 1028-1037 (GHPTPRPASP) show a composition bias toward pro residues. A Phosphothreonine modification is found at Thr-1067. Phosphoserine is present on Ser-1069. Disordered regions lie at residues 1072-1372 (VTGL…RQKL) and 1389-1410 (KIRQ…STGS). The span at 1148-1160 (DTVKRRPKAKEPD) shows a compositional bias: basic and acidic residues. The span at 1191–1215 (PELPPPPPPAEPPPADLMQLPPLPL) shows a compositional bias: pro residues. Polar residues predominate over residues 1236-1247 (QPVSKIQGSPTP). Residue Ser-1259 is modified to Phosphoserine. Residue Thr-1268 is modified to Phosphothreonine. Pro residues predominate over residues 1268-1283 (TPPPVSPKPPPPPTAP). 3 stretches are compositionally biased toward low complexity: residues 1284-1299 (KPAK…SATP), 1309-1327 (PPAA…SASP), and 1345-1359 (PRAA…PVAS). Position 1363 is a phosphoserine (Ser-1363). The segment covering 1389–1407 (KIRQEDGQGPRPSSIEEKS) has biased composition (basic and acidic residues).

In terms of assembly, binds the CaM kinase domain of CASK. Forms a ternary complex with CASK and LIN7A, LIN7B or LIN7C. Competes with APBA1 that forms a similar complex with CASK and LIN7 proteins. The tripartite complex CASKIN1/CASK/LIN7(A/B/C) binds the cytoplasmic tail of NRXN1. Polymerizes, via the tandem SAM domains, to form long, 8 nM wide fibers, upon which other proteins can assemble.

The protein localises to the cytoplasm. Functionally, may link the scaffolding protein CASK to downstream intracellular effectors. In Mus musculus (Mouse), this protein is Caskin-1 (Caskin1).